The chain runs to 419 residues: D(4) dopamine receptor (419 aa).

The Extracellular portion of the chain corresponds to 1-29 (MGNRSTADADGLLAGRGPAAGASAGASAG). N3 is a glycosylation site (N-linked (GlcNAc...) asparagine). Residues 30-50 (LAGQGAAALVGGVLLIGAVLA) form a helical membrane-spanning segment. At 51 to 71 (GNSLVCVSVATERALQTPTNS) the chain is on the cytoplasmic side. A helical transmembrane segment spans residues 72-92 (FIVSLAAADLLLALLVLPLFV). Na(+) is bound at residue D80. Residues 93-110 (YSEVQGGAWLLSPRLCDA) lie on the Extracellular side of the membrane. A disulfide bridge links C108 with C185. Residues 111 to 131 (LMAMDVMLCTASIFNLCAISV) form a helical membrane-spanning segment. D115 provides a ligand contact to (2R,3R)-nemonapride. Residue S122 participates in Na(+) binding. The Cytoplasmic segment spans residues 132-152 (DRFVAVAVPLRYNRQGGSRRQ). Residues 153–173 (LLLIGATWLLSAAVAAPVLCG) form a helical membrane-spanning segment. Topologically, residues 174–192 (LNDVRGRDPAVCRLEDRDY) are extracellular. The chain crosses the membrane as a helical span at residues 193–213 (VVYSSVCSFFLPCPLMLLLYW). Position 196 (S196) interacts with (2R,3R)-nemonapride. Over 214-346 (ATFRGLQRWE…ITGRERKAMR (133 aa)) the chain is Cytoplasmic. The segment at 230–264 (LHGRAPRRPSGPGPPSPTPPAPRLPQDPCGPDCAP) is disordered. The span at 238-254 (PSGPGPPSPTPPAPRLP) shows a compositional bias: pro residues. One copy of the 1; approximate repeat lies at 249 to 264 (PAPRLPQDPCGPDCAP). The 4 X 16 AA approximate tandem repeats of [PA]-A-P-G-L-P-[PQR]-[DG]-P-C-G-P-D-C-A-P stretch occupies residues 249–312 (PAPRLPQDPC…PDPCGSNCAP (64 aa)). Tandem repeats lie at residues 265–280 (PAPG…DCAP) and 281–296 (AAPS…DCAP). One copy of the 4; approximate repeat lies at 297–312 (PAPGLPPDPCGSNCAP). A disordered region spans residues 317–336 (RAAALPPQTPPQTRRRRRAK). The helical transmembrane segment at 347–367 (VLPVVVGAFLLCWTPFFVVHI) threads the bilayer. Residues 368–382 (TQALCPACSVPPRLV) are Extracellular-facing. Cysteines 372 and 375 form a disulfide. The chain crosses the membrane as a helical span at residues 383 to 403 (SAVTWLGYVNSALNPVIYTVF). Residues 404–419 (NAEFRNVFRKALRACC) are Cytoplasmic-facing. C419 is lipidated: S-palmitoyl cysteine.

This sequence belongs to the G-protein coupled receptor 1 family. As to quaternary structure, forms homo- and heterooligomers with DRD2. D4.7 allele exhibits higher affinity for homodimers compared to DRD2 heterodimers, while alleles D42. and 4.4 have similar affinities for both. The interaction with DRD2 may modulate agonist-induced downstream signaling. Interacts with CLIC6. Interacts with GPRASP1. May interact with ADORA2A. Interacts with KLHL12. Post-translationally, polyubiquitinated by the BCR(KLHL12) E3 ubiquitin ligase complex: polyubiquitination does not lead to degradation of DRD4 protein. In terms of processing, palmitoylated. Palmitoylation of the C-terminal Cys is important for normal expression at the cell membrane. As to expression, highly expressed in retina. Detected at much lower levels in brain, in amygdala, thalamus, hypothalamus, cerebellum and pituitary.

It is found in the cell membrane. With respect to regulation, signaling in response to agonists such as dopamine, epinephrine and norepinephrine is modulated by Na(+); lower Na(+) levels result in higher receptor activity (in vitro). Its function is as follows. Dopamine receptor responsible for neuronal signaling in the mesolimbic system of the brain, an area of the brain that regulates emotion and complex behavior. Activated by dopamine, but also by epinephrine and norepinephrine, and by numerous synthetic agonists and drugs. Agonist binding triggers signaling via G proteins that inhibit adenylyl cyclase. Modulates the circadian rhythm of contrast sensitivity by regulating the rhythmic expression of NPAS2 in the retinal ganglion cells. This is D(4) dopamine receptor (DRD4) from Homo sapiens (Human).